We begin with the raw amino-acid sequence, 538 residues long: Fructooligosaccharide ABC transporter substrate-binding protein FusA (538 aa).

The N-terminal stretch at 1–22 is a signal peptide; it reads MKFKTFSKSAVLLTASLAVLAA. Residue Cys-23 is the site of N-palmitoyl cysteine attachment. Residue Cys-23 is the site of S-diacylglycerol cysteine attachment. Substrate is bound at residue Glu-167. Ca(2+) is bound by residues Asp-215, Asn-217, Asn-219, Glu-221, Asp-223, and Glu-224. Asn-235 serves as a coordination point for substrate. Residues Asp-263, Phe-264, Asp-267, and Asn-268 each coordinate Ca(2+). Substrate contacts are provided by Trp-314, Asn-318, Lys-353, Trp-384, Arg-419, and Glu-423.

The protein belongs to the bacterial solute-binding protein 1 family. The complex is composed of two ATP-binding proteins (MsmK), two transmembrane proteins (FusB and FusC) and a solute-binding protein (FusA).

The protein resides in the cell membrane. Part of the ABC transporter complex FusABC-MsmK involved in short- and long-chain fructooligosaccharide (FOS) import. Required for the utilization of long-chain FOSs. Binds kestose, nystose, fructofuranosyl-nystose and inulin, but not sucrose. Has a preference for long-chain FOSs (tetrasaccharides and larger). The sequence is that of Fructooligosaccharide ABC transporter substrate-binding protein FusA from Streptococcus pneumoniae serotype 4 (strain ATCC BAA-334 / TIGR4).